The primary structure comprises 901 residues: Protein translocase subunit SecA 1 (901 aa).

ATP contacts are provided by residues Gln87, 105–109, and Asp500; that span reads GEGKT. Residues 847–901 are disordered; that stretch reads LNHPESGSWGGEGEGPSSEGAPHLPFKRDGEKVGRNQACPCGSGKKYKQCCGKLS. 4 residues coordinate Zn(2+): Cys885, Cys887, Cys896, and Cys897.

Belongs to the SecA family. Monomer and homodimer. Part of the essential Sec protein translocation apparatus which comprises SecA, SecYEG and auxiliary proteins SecDF-YajC and YidC. Zn(2+) serves as cofactor.

It localises to the cell inner membrane. The protein resides in the cytoplasm. The enzyme catalyses ATP + H2O + cellular proteinSide 1 = ADP + phosphate + cellular proteinSide 2.. Functionally, part of the Sec protein translocase complex. Interacts with the SecYEG preprotein conducting channel. Has a central role in coupling the hydrolysis of ATP to the transfer of proteins into and across the cell membrane, serving both as a receptor for the preprotein-SecB complex and as an ATP-driven molecular motor driving the stepwise translocation of polypeptide chains across the membrane. The chain is Protein translocase subunit SecA 1 from Magnetococcus marinus (strain ATCC BAA-1437 / JCM 17883 / MC-1).